Here is a 526-residue protein sequence, read N- to C-terminus: Exodeoxyribonuclease 7 large subunit (526 aa).

The segment at 497–526 (AMTTEGGTPPAGAKKRSTKPAEPPKQGSLF) is disordered.

The protein belongs to the XseA family. Heterooligomer composed of large and small subunits.

It is found in the cytoplasm. The enzyme catalyses Exonucleolytic cleavage in either 5'- to 3'- or 3'- to 5'-direction to yield nucleoside 5'-phosphates.. Bidirectionally degrades single-stranded DNA into large acid-insoluble oligonucleotides, which are then degraded further into small acid-soluble oligonucleotides. The protein is Exodeoxyribonuclease 7 large subunit of Rhizobium johnstonii (strain DSM 114642 / LMG 32736 / 3841) (Rhizobium leguminosarum bv. viciae).